Consider the following 260-residue polypeptide: NifU-like protein C1709.19c (260 aa).

The tract at residues 161–231 (IKELIETSIR…IPEVENVVQV (71 aa)) is nifU.

The protein belongs to the NifU family.

This is NifU-like protein C1709.19c from Schizosaccharomyces pombe (strain 972 / ATCC 24843) (Fission yeast).